Here is a 486-residue protein sequence, read N- to C-terminus: NADH-quinone oxidoreductase subunit N (486 aa).

14 consecutive transmembrane segments (helical) span residues Ala-11–Val-31, Met-44–Leu-64, Pro-74–Ala-94, Phe-103–Val-123, Met-128–Leu-148, Phe-163–Gly-183, Val-206–Phe-226, Pro-238–Ile-258, Pro-267–Gly-287, Met-300–Thr-320, Met-328–Leu-348, Tyr-371–Phe-391, Val-404–Tyr-424, and Leu-452–Tyr-472.

This sequence belongs to the complex I subunit 2 family. NDH-1 is composed of 14 different subunits. Subunits NuoA, H, J, K, L, M, N constitute the membrane sector of the complex.

It is found in the cell inner membrane. It carries out the reaction a quinone + NADH + 5 H(+)(in) = a quinol + NAD(+) + 4 H(+)(out). NDH-1 shuttles electrons from NADH, via FMN and iron-sulfur (Fe-S) centers, to quinones in the respiratory chain. The immediate electron acceptor for the enzyme in this species is believed to be ubiquinone. Couples the redox reaction to proton translocation (for every two electrons transferred, four hydrogen ions are translocated across the cytoplasmic membrane), and thus conserves the redox energy in a proton gradient. The protein is NADH-quinone oxidoreductase subunit N of Laribacter hongkongensis (strain HLHK9).